Here is a 284-residue protein sequence, read N- to C-terminus: tRNA pseudouridine synthase A (284 aa).

Asp62 serves as the catalytic Nucleophile. Substrate is bound at residue Tyr123.

It belongs to the tRNA pseudouridine synthase TruA family. As to quaternary structure, homodimer.

The enzyme catalyses uridine(38/39/40) in tRNA = pseudouridine(38/39/40) in tRNA. Its function is as follows. Formation of pseudouridine at positions 38, 39 and 40 in the anticodon stem and loop of transfer RNAs. The polypeptide is tRNA pseudouridine synthase A (Streptomyces griseus subsp. griseus (strain JCM 4626 / CBS 651.72 / NBRC 13350 / KCC S-0626 / ISP 5235)).